The primary structure comprises 67 residues: ATCSAVQLSPCLAAITKNTPPSAACCNKLKEQKPCLCGYLKDPNLKNYVNSPGARKTASSCGVALKC.

4 cysteine pairs are disulfide-bonded: cysteine 3–cysteine 35, cysteine 11–cysteine 25, cysteine 26–cysteine 61, and cysteine 37–cysteine 67.

Belongs to the plant LTP family. Monomer. Disulfide bonds.

In terms of biological role, plant non-specific lipid-transfer proteins transfer phospholipids as well as galactolipids across membranes. May play a role in wax or cutin deposition in the cell walls of expanding epidermal cells and certain secretory tissues. In Apium graveolens var. rapaceum (Celeriac), this protein is Non-specific lipid-transfer protein 2.